The primary structure comprises 657 residues: MKDIGAAQETRMANAIRALAMDAVEKAKSGHPGMPMGMADVATVLFNRFLTVDPSAPKWPDRDRFVLSAGHGSMLLYAIHHLLGYADMDMDQIRSFRQLGARTAGHPEYGHAEGIEVTTGPLGQGIATAVGMALAERMKNARYGDDLVDHFTYVIAGDGCLMEGISHEAIDMGGHLGLGRLIVLWDDNRITIDGDSGISTSTDQKAPFAASGWHVLACDGHAPEEIAAAIEAARRDPRPSMIACRTVIGYGAPNKQGGHDVHGAPLGAAEIAAARERLGWDHPPFEIPADLYEAWGRIAARGADARAAWETRLQASPLRAAFETAEAADTSALPPAIAAYKARLSAEAPKVATRKASEMALGVVNEALPFAVGGSADLTGSNLTRSKGMVSVAPGAFAGSYIHYGIREHGMAAAMNGIALHGGLRPYGGTFMAFADYCRPSIRLSALMGVPVTYVMTHDSIGLGEDGPTHQPVEHLASLRAIPNLAVIRPADAVETAEAWEIAMTATSTPTLLVLSRQNLPTVRTEHRDENLTARGAYLLRDPGERQVTLIATGSELELALAAADLLAAEGIAAAVVSAPCFELFAAQPADYRATVLGRAPRVGCEAALRQGWDLFLGPQDGFVGMTGFGASAPAPALYQHFNITAEAIVKSAKERI.

Residue H31 coordinates substrate. Residues H71 and 120–122 (GPL) each bind thiamine diphosphate. Residue D158 coordinates Mg(2+). 2 residues coordinate thiamine diphosphate: G159 and N188. Mg(2+) contacts are provided by N188 and I190. Residues H262, R354, and S381 each coordinate substrate. H262 serves as a coordination point for thiamine diphosphate. E408 serves as the catalytic Proton donor. F434 contacts thiamine diphosphate. Substrate contacts are provided by H458, D466, and R517.

It belongs to the transketolase family. Homodimer. Mg(2+) is required as a cofactor. Requires Ca(2+) as cofactor. It depends on Mn(2+) as a cofactor. Co(2+) serves as cofactor. The cofactor is thiamine diphosphate.

The catalysed reaction is D-sedoheptulose 7-phosphate + D-glyceraldehyde 3-phosphate = aldehydo-D-ribose 5-phosphate + D-xylulose 5-phosphate. Its pathway is carbohydrate biosynthesis; Calvin cycle. The protein operates within carbohydrate degradation; pentose phosphate pathway. Functionally, catalyzes the transfer of a two-carbon ketol group from a ketose donor to an aldose acceptor, via a covalent intermediate with the cofactor thiamine pyrophosphate. The chain is Transketolase (tklB) from Cereibacter sphaeroides (Rhodobacter sphaeroides).